The primary structure comprises 401 residues: Flagellin D (401 aa).

It belongs to the bacterial flagellin family.

The protein resides in the secreted. It localises to the bacterial flagellum. Flagellin is the subunit protein which polymerizes to form the filaments of bacterial flagella. The protein is Flagellin D (flaD) of Rhizobium meliloti (strain 1021) (Ensifer meliloti).